Here is a 767-residue protein sequence, read N- to C-terminus: DNA topoisomerase 1 (767 aa).

Basic and acidic residues predominate over residues 1–23 (MSGDHLHNDSQIEADFRLNDSHK). Residues 1–200 (MSGDHLHNDS…DNKKKKAKKE (200 aa)) are disordered. Ser-2 is modified (N-acetylserine). Residues Ser-2 and Ser-10 each carry the phosphoserine modification. A compositionally biased stretch (basic residues) spans 24 to 39 (HKDKHKDREHRHKEHK). Positions 40 to 110 (KDKDKDREKS…DAKIKKEKEN (71 aa)) are enriched in basic and acidic residues. Ser-59 bears the Phosphoserine mark. Lys-103 is covalently cross-linked (Glycyl lysine isopeptide (Lys-Gly) (interchain with G-Cter in SUMO2)). A Glycyl lysine isopeptide (Lys-Gly) (interchain with G-Cter in SUMO); alternate cross-link involves residue Lys-105. A Glycyl lysine isopeptide (Lys-Gly) (interchain with G-Cter in SUMO2); alternate cross-link involves residue Lys-105. Ser-114 is subject to Phosphoserine. A Glycyl lysine isopeptide (Lys-Gly) (interchain with G-Cter in SUMO); alternate cross-link involves residue Lys-119. Lys-119 is covalently cross-linked (Glycyl lysine isopeptide (Lys-Gly) (interchain with G-Cter in SUMO2); alternate). Residue Lys-119 forms a Glycyl lysine isopeptide (Lys-Gly) (interchain with G-Cter in SUMO1); alternate linkage. Residues 131-168 (PKEDIKPLKRPRDEDDADYKPKKIKTEDIKKEKKRKLE) are compositionally biased toward basic and acidic residues. Residues Lys-136 and Lys-150 each participate in a glycyl lysine isopeptide (Lys-Gly) (interchain with G-Cter in SUMO2) cross-link. Lys-155 participates in a covalent cross-link: Glycyl lysine isopeptide (Lys-Gly) (interchain with G-Cter in SUMO); alternate. A Glycyl lysine isopeptide (Lys-Gly) (interchain with G-Cter in SUMO2); alternate cross-link involves residue Lys-155. Glycyl lysine isopeptide (Lys-Gly) (interchain with G-Cter in SUMO2) cross-links involve residues Lys-160 and Lys-166. A Glycyl lysine isopeptide (Lys-Gly) (interchain with G-Cter in SUMO2); alternate cross-link involves residue Lys-174. At Lys-174 the chain carries N6-acetyllysine; alternate. Basic and acidic residues predominate over residues 181–200 (KDKDKKVAEPDNKKKKAKKE). Residue Lys-206 forms a Glycyl lysine isopeptide (Lys-Gly) (interchain with G-Cter in SUMO2) linkage. Lys-282 bears the N6-acetyllysine mark. A Glycyl lysine isopeptide (Lys-Gly) (interchain with G-Cter in SUMO2) cross-link involves residue Lys-338. Interaction with DNA stretches follow at residues 427 to 428 (KY) and 490 to 495 (RAGNEK). A Topo IB-type catalytic domain is found at 434–767 (SSRIKGEKDW…IDMTDEDYEF (334 aa)). At Ser-508 the chain carries Phosphoserine; by CK2. Residue Lys-551 forms a Glycyl lysine isopeptide (Lys-Gly) (interchain with G-Cter in SUMO2) linkage. The interaction with DNA stretch occupies residues 587–589 (TAK). Glycyl lysine isopeptide (Lys-Gly) (interchain with G-Cter in SUMO2) cross-links involve residues Lys-644, Lys-702, and Lys-714. Residue Tyr-725 is the O-(3'-phospho-DNA)-tyrosine intermediate of the active site.

The protein belongs to the type IB topoisomerase family. Monomer. Interacts with ERCC6. Interacts with TPRN; TPRN interacts with a number of DNA damage response proteins, is recruited to sites of DNA damage and may play a role in DNA damage repair. Sumoylated. Lys-119 is the main site of sumoylation. Sumoylation plays a role in partitioning TOP1 between nucleoli and nucleoplasm. Levels are dramatically increased on camptothecin (CPT) treatment. In terms of processing, phosphorylation at Ser-508 by CK2 increases binding to supercoiled DNA and sensitivity to camptothecin.

It is found in the nucleus. The protein localises to the nucleolus. Its subcellular location is the nucleoplasm. It carries out the reaction ATP-independent breakage of single-stranded DNA, followed by passage and rejoining.. Its function is as follows. Releases the supercoiling and torsional tension of DNA introduced during the DNA replication and transcription by transiently cleaving and rejoining one strand of the DNA duplex. Introduces a single-strand break via transesterification at a target site in duplex DNA. The scissile phosphodiester is attacked by the catalytic tyrosine of the enzyme, resulting in the formation of a DNA-(3'-phosphotyrosyl)-enzyme intermediate and the expulsion of a 5'-OH DNA strand. The free DNA strand then rotates around the intact phosphodiester bond on the opposing strand, thus removing DNA supercoils. Finally, in the religation step, the DNA 5'-OH attacks the covalent intermediate to expel the active-site tyrosine and restore the DNA phosphodiester backbone. Regulates the alternative splicing of tissue factor (F3) pre-mRNA in endothelial cells. Involved in the circadian transcription of the core circadian clock component BMAL1 by altering the chromatin structure around the ROR response elements (ROREs) on the BMAL1 promoter. In Rattus norvegicus (Rat), this protein is DNA topoisomerase 1 (Top1).